The primary structure comprises 281 residues: Ribosomal RNA small subunit methyltransferase A (281 aa).

S-adenosyl-L-methionine is bound by residues Asn-36, Leu-38, Gly-63, Glu-84, Asp-109, and Asn-127.

Belongs to the class I-like SAM-binding methyltransferase superfamily. rRNA adenine N(6)-methyltransferase family. RsmA subfamily.

The protein localises to the cytoplasm. It catalyses the reaction adenosine(1518)/adenosine(1519) in 16S rRNA + 4 S-adenosyl-L-methionine = N(6)-dimethyladenosine(1518)/N(6)-dimethyladenosine(1519) in 16S rRNA + 4 S-adenosyl-L-homocysteine + 4 H(+). In terms of biological role, specifically dimethylates two adjacent adenosines (A1518 and A1519) in the loop of a conserved hairpin near the 3'-end of 16S rRNA in the 30S particle. May play a critical role in biogenesis of 30S subunits. In Borrelia garinii subsp. bavariensis (strain ATCC BAA-2496 / DSM 23469 / PBi) (Borreliella bavariensis), this protein is Ribosomal RNA small subunit methyltransferase A.